A 1152-amino-acid chain; its full sequence is DNA-directed RNA polymerase subunit beta' (1152 aa).

Residues Cys-60, Cys-62, Cys-75, and Cys-78 each coordinate Zn(2+). Positions 449, 451, and 453 each coordinate Mg(2+). 4 residues coordinate Zn(2+): Cys-779, Cys-853, Cys-860, and Cys-863.

Belongs to the RNA polymerase beta' chain family. As to quaternary structure, the RNAP catalytic core consists of 2 alpha, 1 beta, 1 beta' and 1 omega subunit. When a sigma factor is associated with the core the holoenzyme is formed, which can initiate transcription. Mg(2+) serves as cofactor. It depends on Zn(2+) as a cofactor.

The catalysed reaction is RNA(n) + a ribonucleoside 5'-triphosphate = RNA(n+1) + diphosphate. Functionally, DNA-dependent RNA polymerase catalyzes the transcription of DNA into RNA using the four ribonucleoside triphosphates as substrates. In Carboxydothermus hydrogenoformans (strain ATCC BAA-161 / DSM 6008 / Z-2901), this protein is DNA-directed RNA polymerase subunit beta'.